Here is a 316-residue protein sequence, read N- to C-terminus: Pantothenate kinase (316 aa).

Gly-95 to Ser-102 contacts ATP.

The protein belongs to the prokaryotic pantothenate kinase family.

The protein resides in the cytoplasm. It catalyses the reaction (R)-pantothenate + ATP = (R)-4'-phosphopantothenate + ADP + H(+). The protein operates within cofactor biosynthesis; coenzyme A biosynthesis; CoA from (R)-pantothenate: step 1/5. The protein is Pantothenate kinase of Serratia proteamaculans (strain 568).